A 720-amino-acid chain; its full sequence is Cyclic nucleotide-gated ion channel 17 (720 aa).

Over 1–85 (MELRKDKLLM…SEIVLKWNWV (85 aa)) the chain is Cytoplasmic. A helical membrane pass occupies residues 86–106 (FIVSCMVALFIDPLYFFVPAI). Over 107–121 (GGDKNYPCARTDTSL) the chain is Extracellular. A helical membrane pass occupies residues 122-142 (SILVTFFRTIADLFYLLHIFI). The Cytoplasmic segment spans residues 143–178 (KFRTGFIAPNSSTRVFGRGELVMDPKAIAWRYIKSD). A helical membrane pass occupies residues 179–199 (FIIDLIATLPLPQIVIWFVIS). The Extracellular portion of the chain corresponds to 200–211 (TTKSYRFDHNNN). A helical transmembrane segment spans residues 212–232 (AIALIVLLQYIPRFYLIIPLS). Residues 233 to 252 (SQIVKATGVVTKTAWAGAAY) are Cytoplasmic-facing. Residues 253-273 (NLLLYMLASHVLGAAWYILSV) traverse the membrane as a helical segment. Residues 274–377 (DRYTSCWKSR…LSTTMFMGET (104 aa)) lie on the Extracellular side of the membrane. Residues 378–398 (TFAVLIAIFGLVLFAHLIGNM) form a helical membrane-spanning segment. Residues 399 to 720 (QTYLQSLTVR…EPDFSAEHDD (322 aa)) lie on the Cytoplasmic side of the membrane. Residues 481–605 (FFSQ…SKKL) and Glu552 contribute to the a nucleoside 3',5'-cyclic phosphate site. Residues 597–612 (FRRLHSKKLQHTFRFY) form a calmodulin-binding region. In terms of domain architecture, IQ spans 617–646 (RTWAACFIQAAWRRYKRRVMENNLTAIESM).

This sequence belongs to the cyclic nucleotide-gated cation channel (TC 1.A.1.5) family. As to quaternary structure, homotetramer or heterotetramer. Part of a functional complex containing PSKR1, BAK1, CNGC17, and AHA. Interacts with AHA1, AHA2, and BAK1, but not with PSKR1 or BRI1.

The protein localises to the cell membrane. Functionally, probable cyclic nucleotide-gated ion channel. Forms a functional cation-translocating unit with AHAs that is activated by PSKR1/BAK1 and possibly other BAK1/RLK complexes. Required for PSK-induced protoplast expansion. This chain is Cyclic nucleotide-gated ion channel 17, found in Arabidopsis thaliana (Mouse-ear cress).